A 334-amino-acid chain; its full sequence is MKTLGEFIVEKQHDFSHATGELTALLSAIKLGAKIIHRDINKAGLVDILGTSGVSNVQGEVQMKLDLYANEKLKAALKARGEVAGIASEEEDEIVIFDGERAENAKYVVLMDPLDGSSNIDVNVSVGTIFSIYRRITPVGIPVTEEDFLQPGSAQVAAGYVVYGSSTMLVYTTGYGVHAFTYDPSLGVFCLSHEKVRFPATGNMYSINEGNYIKFPRGVKKYIKYCQEQDEATQRPYTSRYIGSLVADFHRNLLKGGIYIYPSTASHPQGKLRLLYECNPMAFLAEQAGGKASDGKNRILDITPVKLHQRAPFFVGTKSMVEDAERFIAENPDE.

Residues Glu89, Asp112, Leu114, and Asp115 each coordinate Mg(2+). Residues 115–118 (DGSS), Asn208, Tyr241, and Lys271 each bind substrate. A Mg(2+)-binding site is contributed by Glu277.

It belongs to the FBPase class 1 family. Homotetramer. It depends on Mg(2+) as a cofactor.

The protein resides in the cytoplasm. The catalysed reaction is beta-D-fructose 1,6-bisphosphate + H2O = beta-D-fructose 6-phosphate + phosphate. It participates in carbohydrate biosynthesis; gluconeogenesis. The protein is Fructose-1,6-bisphosphatase class 1 of Serratia proteamaculans (strain 568).